The primary structure comprises 239 residues: UDP-2,3-diacylglucosamine hydrolase (239 aa).

Mn(2+)-binding residues include Asp-8, His-10, Asp-41, Asn-78, and His-113. Asn-78–Arg-79 serves as a coordination point for substrate. Asp-121, Ser-159, Asn-163, Lys-166, and His-194 together coordinate substrate. Mn(2+)-binding residues include His-194 and His-196.

The protein belongs to the LpxH family. It depends on Mn(2+) as a cofactor.

The protein resides in the cell inner membrane. It carries out the reaction UDP-2-N,3-O-bis[(3R)-3-hydroxytetradecanoyl]-alpha-D-glucosamine + H2O = 2-N,3-O-bis[(3R)-3-hydroxytetradecanoyl]-alpha-D-glucosaminyl 1-phosphate + UMP + 2 H(+). It functions in the pathway glycolipid biosynthesis; lipid IV(A) biosynthesis; lipid IV(A) from (3R)-3-hydroxytetradecanoyl-[acyl-carrier-protein] and UDP-N-acetyl-alpha-D-glucosamine: step 4/6. In terms of biological role, hydrolyzes the pyrophosphate bond of UDP-2,3-diacylglucosamine to yield 2,3-diacylglucosamine 1-phosphate (lipid X) and UMP by catalyzing the attack of water at the alpha-P atom. Involved in the biosynthesis of lipid A, a phosphorylated glycolipid that anchors the lipopolysaccharide to the outer membrane of the cell. This Shewanella sp. (strain ANA-3) protein is UDP-2,3-diacylglucosamine hydrolase.